We begin with the raw amino-acid sequence, 50 residues long: U37-theraphotoxin-Cg1a (50 aa).

An N-terminal signal peptide occupies residues 1–19 (MRVLLIIAGLALLSVVCYT).

Belongs to the neurotoxin 10 (Hwtx-1) family. 67 (Jztx-67) subfamily. As to expression, expressed by the venom gland.

The protein localises to the secreted. The polypeptide is U37-theraphotoxin-Cg1a (Chilobrachys guangxiensis (Chinese earth tiger tarantula)).